A 483-amino-acid chain; its full sequence is Phloretin 2'-O-glucosyltransferase (483 aa).

H15 acts as the Proton acceptor in catalysis. Residue H15 coordinates an anthocyanidin. D118 (charge relay) is an active-site residue. Residues T140, A360, Q362, H377, W380, N381, S382, and E385 each contribute to the UDP-alpha-D-glucose site. A400 is an an anthocyanidin binding site. UDP-alpha-D-glucose contacts are provided by E401 and Q402.

Belongs to the UDP-glycosyltransferase family.

It catalyses the reaction phloretin + UDP-alpha-D-glucose = phlorizin + UDP + H(+). Functionally, glycosyltransferase that possesses phloretin 2'-O-glycosyltransferase activity. Converts phloretin to phlorizin (phloretin 2'-O-glucoside), a potent antioxidant. Is specific for phloretin and does not possess glycosyltransferase activity toward naringenin, naringenin chalcone, eriodictyol, eriodictyol chalcone, apigenin, luteolin, kaempferol, quercetin, isoliquiritigenin, butein, caffeic acid, 2-coumaric acid, 3-coumaric acid, 3-hydroxybenzoic acid, 3,4-dihydroxybenzoic acid and 3,4-dihydroxyhydrocinnamic acid. Can glycosylate phloretin in the presence of UDP-glucose, UDP-xylose and UDP-galactose. The sequence is that of Phloretin 2'-O-glucosyltransferase from Pyrus communis (Pear).